Reading from the N-terminus, the 380-residue chain is Putative glutamate--cysteine ligase 2 (380 aa).

This sequence belongs to the glutamate--cysteine ligase type 2 family. YbdK subfamily.

It carries out the reaction L-cysteine + L-glutamate + ATP = gamma-L-glutamyl-L-cysteine + ADP + phosphate + H(+). Its function is as follows. ATP-dependent carboxylate-amine ligase which exhibits weak glutamate--cysteine ligase activity. The polypeptide is Putative glutamate--cysteine ligase 2 (Pseudomonas entomophila (strain L48)).